The primary structure comprises 201 residues: Glutathione peroxidase 1, mitochondrial (201 aa).

A mitochondrion-targeting transit peptide spans 1-27 (MLLTRKNVAVRPARAARRDVRAMSLLG). The active site involves Sec-75. A non-standard amino acid (selenocysteine) is located at residue Sec-75.

Its subcellular location is the mitochondrion. It catalyses the reaction 2 glutathione + H2O2 = glutathione disulfide + 2 H2O. In terms of biological role, may constitute a glutathione peroxidase-like protective system against oxidative stresses. Hydrogen peroxide, tert-butyl hydroperoxide and cumene, but not phosphatidylcholine hydroperoxide, can act as acceptors. The protein is Glutathione peroxidase 1, mitochondrial of Chlamydomonas reinhardtii (Chlamydomonas smithii).